A 137-amino-acid polypeptide reads, in one-letter code: Small ribosomal subunit protein uS12 (137 aa).

The disordered stretch occupies residues 1–57; sequence MPTINQLVRKPRQSKIKKSDSPALNKGFNSKKKKFTDLNSPQKRGVCTRVGTMTPRK. 3-methylthioaspartic acid is present on D102. Residues 118–137 are disordered; that stretch reads SGVDGRRQGRSLYGTKKPKN.

This sequence belongs to the universal ribosomal protein uS12 family. As to quaternary structure, part of the 30S ribosomal subunit. Contacts proteins S8 and S17. May interact with IF1 in the 30S initiation complex.

Its function is as follows. With S4 and S5 plays an important role in translational accuracy. In terms of biological role, interacts with and stabilizes bases of the 16S rRNA that are involved in tRNA selection in the A site and with the mRNA backbone. Located at the interface of the 30S and 50S subunits, it traverses the body of the 30S subunit contacting proteins on the other side and probably holding the rRNA structure together. The combined cluster of proteins S8, S12 and S17 appears to hold together the shoulder and platform of the 30S subunit. This is Small ribosomal subunit protein uS12 from Staphylococcus aureus (strain COL).